A 412-amino-acid chain; its full sequence is Serine hydroxymethyltransferase 1 (412 aa).

(6S)-5,6,7,8-tetrahydrofolate-binding positions include Leu116 and 120 to 122 (GHL). The residue at position 225 (Lys225) is an N6-(pyridoxal phosphate)lysine.

The protein belongs to the SHMT family. As to quaternary structure, homodimer. Pyridoxal 5'-phosphate is required as a cofactor.

It is found in the cytoplasm. It carries out the reaction (6R)-5,10-methylene-5,6,7,8-tetrahydrofolate + glycine + H2O = (6S)-5,6,7,8-tetrahydrofolate + L-serine. Its pathway is one-carbon metabolism; tetrahydrofolate interconversion. It participates in amino-acid biosynthesis; glycine biosynthesis; glycine from L-serine: step 1/1. Functionally, catalyzes the reversible interconversion of serine and glycine with tetrahydrofolate (THF) serving as the one-carbon carrier. This reaction serves as the major source of one-carbon groups required for the biosynthesis of purines, thymidylate, methionine, and other important biomolecules. Also exhibits THF-independent aldolase activity toward beta-hydroxyamino acids, producing glycine and aldehydes, via a retro-aldol mechanism. The protein is Serine hydroxymethyltransferase 1 of Pseudomonas fluorescens (strain Pf0-1).